A 397-amino-acid chain; its full sequence is Acid extracellular protease (397 aa).

Positions 1–17 (MQFSLATLTTLLAFVAA) are cleaved as a signal peptide. One can recognise a Peptidase A1 domain in the interval 61–378 (YQVQISLGGQ…DLERDEVSIA (318 aa)). Residue Asp-77 is part of the active site. Asn-88 carries N-linked (GlcNAc...) asparagine glycosylation. Residues Cys-93 and Cys-100 are joined by a disulfide bond. Asp-264 is a catalytic residue. Residues Cys-303 and Cys-343 are joined by a disulfide bond. Asn-310 and Asn-314 each carry an N-linked (GlcNAc...) asparagine glycan.

Belongs to the peptidase A1 family.

It localises to the secreted. The sequence is that of Acid extracellular protease (AXP1) from Yarrowia lipolytica (strain CLIB 122 / E 150) (Yeast).